The chain runs to 2944 residues: Collagen alpha-1(VII) chain (2944 aa).

Residues 1–16 form the signal peptide; that stretch reads MTLRLLVAALCAGILA. Residues 17-1253 are nonhelical region (NC1); sequence EAPRVRAQHR…PEPCPVYCPK (1237 aa). Positions 38-211 constitute a VWFA 1 domain; sequence DIVFLLDGSS…SILRTLLPLV (174 aa). Fibronectin type-III domains follow at residues 234-329, 330-416, 417-507, 510-597, 600-687, 688-775, 778-866, 869-957, and 958-1051; these read APRD…TALE, GPEL…TDAS, VEQT…PELP, PVTD…EPET, AVPG…DPLG, PVRT…APEP, RVSR…PPEA, ALGT…SPRV, and PSIE…CPRG. The N-linked (GlcNAc...) asparagine glycan is linked to N337. The interval 632–651 is disordered; sequence STGSGPESSQTLPPDSTATD. N-linked (GlcNAc...) asparagine glycosylation is present at N786. Residues 1054–1229 form the VWFA 2 domain; that stretch reads DVVFLPHATQ…PSLDQAVSGL (176 aa). N1109 is a glycosylation site (N-linked (GlcNAc...) asparagine). 2 short sequence motifs (cell attachment site) span residues 1170–1172 and 1334–1336; these read RGD. Disordered regions lie at residues 1239–1941, 1963–2782, and 2837–2872; these read TTQP…SVPN, WDES…EKGE, and SHAE…PWDS. Positions 1254 to 1477 are interrupted collagenous region; it reads GQKGEPGEMG…GPRGPPGAIG (224 aa). The segment at 1254–2784 is triple-helical region; sequence GQKGEPGEMG…GPRGEKGEAA (1531 aa). Residues 1336 to 1346 are compositionally biased toward basic and acidic residues; the sequence is DPGERGPRGPK. The span at 1355–1365 shows a compositional bias: gly residues; the sequence is VIGGEGPGLPG. Over residues 1399-1408 the composition is skewed to basic and acidic residues; it reads KGDKGDRGER. The segment covering 1429-1440 has biased composition (pro residues); the sequence is PGSPGPQGPVGP. Residues 1574–1583 are compositionally biased toward low complexity; sequence RGPPGLVLPG. Composition is skewed to basic and acidic residues over residues 1630–1642, 1669–1683, and 1715–1733; these read RGRD…KGDE, VGEK…EDGR, and AREK…RGPK. The segment covering 1786 to 1802 has biased composition (low complexity); sequence KPGAAGPSGPNGAAGKA. Residues 1852-1877 show a composition bias toward basic and acidic residues; the sequence is EDGRKGEKGDSGASGREGRDGPKGER. Over residues 1886–1897 the composition is skewed to pro residues; it reads QGPPGLPGPVGP. Gly residues predominate over residues 1898-1911; sequence PGQGFPGVPGGTGP. Residues 1974–1984 show a composition bias toward basic and acidic residues; sequence PERRRGPKGDS. Positions 2008–2010 match the Cell attachment site motif; that stretch reads RGD. A 4-hydroxyproline mark is found at P2036 and P2039. A compositionally biased stretch (gly residues) spans 2046 to 2055; sequence GRAGGVGEAG. The span at 2056–2074 shows a compositional bias: basic and acidic residues; sequence RPGERGERGEKGERGEQGR. The segment covering 2078 to 2092 has biased composition (pro residues); the sequence is PGLPGTPGPPGPPGP. Residues P2084, P2087, and P2090 each carry the 4-hydroxyproline modification. Residues 2127–2143 are compositionally biased toward basic and acidic residues; sequence PKGDRGVPGIKGDRGEP. 4-hydroxyproline is present on residues P2167, P2176, P2185, and P2188. 2 stretches are compositionally biased toward low complexity: residues 2191-2206 and 2235-2250; these read PGLA…SGLK and SGLV…PGQV. Basic and acidic residues predominate over residues 2328 to 2346; sequence AKGDRGLPGPRGEKGEAGR. Residues 2387–2406 are compositionally biased toward low complexity; the sequence is VKGDLGLPGLPGAPGVVGFP. Pro residues predominate over residues 2438–2448; sequence PLGPPGPPGSV. Composition is skewed to basic and acidic residues over residues 2471 to 2486 and 2534 to 2570; these read RGER…DGRP and AKGD…EPGD. The Cell attachment site motif lies at 2553–2555; sequence RGD. Residues 2573 to 2601 show a composition bias toward low complexity; it reads SAGLPGLRGLLGPQGQPGAAGIPGDPGSP. 2 positions are modified to 5-hydroxylysine; alternate: K2625 and K2631. K2625 and K2631 each carry an O-linked (Gal...) hydroxylysine; alternate glycan. 4-hydroxyproline occurs at positions 2664, 2667, and 2673. A compositionally biased stretch (gly residues) spans 2704 to 2713; the sequence is GTPGIGGFPG. The span at 2749-2762 shows a compositional bias: low complexity; it reads GERVVGAPGVPGAP. The nonhelical region (NC2) stretch occupies residues 2785-2944; sequence LTEDDIRGFV…QSQGTGTAQD (160 aa). A compositionally biased stretch (basic and acidic residues) spans 2837–2847; sequence SHAEEEERVPP. The segment covering 2848–2872 has biased composition (acidic residues); sequence EDDEYSEYSEYSVEEYQDPEAPWDS. Residues 2872 to 2944 form the BPTI/Kunitz inhibitor domain; it reads SDDPCSLPLD…QSQGTGTAQD (73 aa). Disulfide bonds link C2876–C2929, C2885–C2912, and C2904–C2925.

As to quaternary structure, homotrimer. Interacts with MIA3/TANGO1; facilitating its loading into transport carriers and subsequent secretion. Post-translationally, prolines at the third position of the tripeptide repeating unit (G-X-Y) are hydroxylated in some or all of the chains.

The protein localises to the secreted. It is found in the extracellular space. Its subcellular location is the extracellular matrix. It localises to the basement membrane. In terms of biological role, stratified squamous epithelial basement membrane protein that forms anchoring fibrils which may contribute to epithelial basement membrane organization and adherence by interacting with extracellular matrix (ECM) proteins such as type IV collagen. The polypeptide is Collagen alpha-1(VII) chain (COL7A1) (Homo sapiens (Human)).